Reading from the N-terminus, the 743-residue chain is NAD(P)H-quinone oxidoreductase subunit 5, chloroplastic (743 aa).

16 consecutive transmembrane segments (helical) span residues 9–29 (WIIP…LLLF), 40–60 (WAFQ…NLSI), 89–109 (IDPL…MVLI), 125–145 (FAYM…SNLI), 147–167 (IYIF…FWFT), 185–205 (GDFG…SFEF), 224–244 (VFVT…SAQF), 258–278 (TPIS…FLVA), 284–304 (FIVI…TVFF), 327–347 (LGYM…FHLI), 354–374 (ALLF…VGYC), 396–416 (NSFL…CFWS), 425–445 (WLYS…TAFY), 551–571 (LFPI…GIPF), 607–627 (VFSV…YKPV), and 723–743 (YLFF…FLNL).

This sequence belongs to the complex I subunit 5 family. NDH is composed of at least 16 different subunits, 5 of which are encoded in the nucleus.

Its subcellular location is the plastid. The protein resides in the chloroplast thylakoid membrane. It catalyses the reaction a plastoquinone + NADH + (n+1) H(+)(in) = a plastoquinol + NAD(+) + n H(+)(out). It carries out the reaction a plastoquinone + NADPH + (n+1) H(+)(in) = a plastoquinol + NADP(+) + n H(+)(out). Its function is as follows. NDH shuttles electrons from NAD(P)H:plastoquinone, via FMN and iron-sulfur (Fe-S) centers, to quinones in the photosynthetic chain and possibly in a chloroplast respiratory chain. The immediate electron acceptor for the enzyme in this species is believed to be plastoquinone. Couples the redox reaction to proton translocation, and thus conserves the redox energy in a proton gradient. The chain is NAD(P)H-quinone oxidoreductase subunit 5, chloroplastic (ndhF) from Helianthus annuus (Common sunflower).